Consider the following 302-residue polypeptide: Nudix hydrolase 22, chloroplastic (302 aa).

A chloroplast-targeting transit peptide spans 1-25 (MKSGASAASPTAKSFNFGSSRLLAL). Residues 73–229 (PKKAAVLICL…DSDYVIWGLT (157 aa)) form the Nudix hydrolase domain. The Nudix box signature appears at 114–135 (KAEEHDKDDGITATREAEEEIG). Mg(2+)-binding residues include E129 and E133.

It belongs to the Nudix hydrolase family. The cofactor is Mg(2+). It depends on Mn(2+) as a cofactor. In terms of tissue distribution, expressed in roots, leaves, stems and inflorescences.

It localises to the plastid. The protein resides in the chloroplast. In terms of biological role, probably mediates the hydrolysis of some nucleoside diphosphate derivatives. This is Nudix hydrolase 22, chloroplastic (NUDT22) from Arabidopsis thaliana (Mouse-ear cress).